A 117-amino-acid polypeptide reads, in one-letter code: Ribonuclease P protein component 4 (117 aa).

Residues Cys64, Cys67, Cys93, and Cys96 each coordinate Zn(2+).

It belongs to the eukaryotic/archaeal RNase P protein component 4 family. In terms of assembly, consists of a catalytic RNA component and at least 4-5 protein subunits. Zn(2+) serves as cofactor.

The protein resides in the cytoplasm. The enzyme catalyses Endonucleolytic cleavage of RNA, removing 5'-extranucleotides from tRNA precursor.. In terms of biological role, part of ribonuclease P, a protein complex that generates mature tRNA molecules by cleaving their 5'-ends. The protein is Ribonuclease P protein component 4 of Pyrococcus abyssi (strain GE5 / Orsay).